Reading from the N-terminus, the 308-residue chain is Pantoate--beta-alanine ligase (308 aa).

A propeptide (removed; partial) is located at residue alanine 2.

Belongs to the pantothenate synthetase family. Homodimer. Expressed at low levels in leaf and root.

The protein resides in the cytoplasm. The catalysed reaction is (R)-pantoate + beta-alanine + ATP = (R)-pantothenate + AMP + diphosphate + H(+). It functions in the pathway cofactor biosynthesis; (R)-pantothenate biosynthesis; (R)-pantothenate from (R)-pantoate and beta-alanine: step 1/1. The protein is Pantoate--beta-alanine ligase (PANC) of Lotus japonicus (Lotus corniculatus var. japonicus).